A 212-amino-acid polypeptide reads, in one-letter code: Ropporin-1 (212 aa).

The region spanning 12 to 43 is the RIIa domain; it reads PELPELLKQFTKDAIRTQPPDLIQWAAEYFGA. At serine 56 the chain carries Phosphoserine. The interaction with RHPN1 stretch occupies residues 209–212; that stretch reads VRLE.

The protein belongs to the ropporin family. In terms of assembly, homodimer. Interacts with AKAP3. May interact with SPA17. Interacts with RHPN1. Interacts with FSCB; the interaction increases upon spermatozoa capacitation conditions. Interacts with CFAP61. Sumoylated, sumoylation decreases upon spermatozoa capacitation conditions. In terms of tissue distribution, testis-specific. Present in the most inner parts of seminiferous tubules (at protein level).

Its subcellular location is the cell projection. The protein localises to the cilium. It localises to the flagellum. Functionally, important for male fertility. With ROPN1L, involved in fibrous sheath integrity and sperm motility, plays a role in PKA-dependent signaling processes required for spermatozoa capacitation. The polypeptide is Ropporin-1 (Ropn1) (Mus musculus (Mouse)).